Reading from the N-terminus, the 320-residue chain is o-succinylbenzoate synthase (320 aa).

Catalysis depends on Lys133, which acts as the Proton donor. Asp161, Glu190, and Asp213 together coordinate Mg(2+). Lys235 serves as the catalytic Proton acceptor.

It belongs to the mandelate racemase/muconate lactonizing enzyme family. MenC type 1 subfamily. The cofactor is a divalent metal cation.

It catalyses the reaction (1R,6R)-6-hydroxy-2-succinyl-cyclohexa-2,4-diene-1-carboxylate = 2-succinylbenzoate + H2O. It participates in quinol/quinone metabolism; 1,4-dihydroxy-2-naphthoate biosynthesis; 1,4-dihydroxy-2-naphthoate from chorismate: step 4/7. Its pathway is quinol/quinone metabolism; menaquinone biosynthesis. Its function is as follows. Converts 2-succinyl-6-hydroxy-2,4-cyclohexadiene-1-carboxylate (SHCHC) to 2-succinylbenzoate (OSB). This Escherichia coli O127:H6 (strain E2348/69 / EPEC) protein is o-succinylbenzoate synthase.